Reading from the N-terminus, the 461-residue chain is Phosphatidate cytidylyltransferase 1 (461 aa).

Positions 1-67 (MLELRHRGSC…IPEIPPSSDR (67 aa)) are disordered. At Arg-7 the chain carries Omega-N-methylarginine. Residues 20-56 (PHREGEAAGGDHETESTSDKETDIDDRYGDLDSRTDS) are compositionally biased toward basic and acidic residues. Phosphoserine occurs at positions 35 and 37. 6 helical membrane-spanning segments follow: residues 96 to 116 (MISL…LLVL), 149 to 169 (FLLC…FATF), 183 to 203 (HRFI…LSLV), 230 to 250 (LVIQ…SSVI), 279 to 299 (GFIG…YVLS), and 357 to 377 (IALS…ASGF).

It belongs to the CDS family. As to quaternary structure, homodimer. Interacts with FOS; this interaction may enhance catalytic activity. The cofactor is Mg(2+). In terms of tissue distribution, expressed in adult tissues such as placenta, brain, small intestine, ovary, testis and prostate. Highly expressed in fetal kidney, lung and brain. Lower level in fetal liver.

It localises to the endoplasmic reticulum membrane. It carries out the reaction a 1,2-diacyl-sn-glycero-3-phosphate + CTP + H(+) = a CDP-1,2-diacyl-sn-glycerol + diphosphate. The enzyme catalyses 1-octadecanoyl-2-(5Z,8Z,11Z,14Z-eicosatetraenoyl)-sn-glycero-3-phosphate + CTP + H(+) = 1-octadecanoyl-2-(5Z,8Z,11Z,14Z-eicosatetraenoyl)-sn-glycero-3-cytidine-5'-diphosphate + diphosphate. The catalysed reaction is 1-octadecanoyl-2-(9Z,12Z-octadecadienoyl)-sn-glycero-3-phosphate + CTP + H(+) = 1-octadecanoyl-2-(9Z,12Z-octadecadienoyl)-sn-glycero-3-cytidine-5'-diphosphate + diphosphate. It catalyses the reaction 1-hexadecanoyl-2-(5Z,8Z,11Z,14Z-eicosatetraenoyl)-sn-glycero-3-phosphate + CTP + H(+) = 1-hexadecanoyl-2-(5Z,8Z,11Z,14Z-eicosatetraenoyl)-sn-glycero-3-cytidine-5'-diphosphate + diphosphate. It carries out the reaction 1,2-di-(5Z,8Z,11Z,14Z)-eicosatetraenoyl-sn-glycero-3-phosphate + CTP + H(+) = 1,2-di-(5Z,8Z,11Z,14Z-eicosatetraenoyl)-sn-glycero-3-cytidine-5'-diphosphate + diphosphate. The enzyme catalyses 1-octadecanoyl-2-(9Z-octadecenoyl)-sn-glycero-3-phosphate + CTP + H(+) = 1-octadecanoyl-2-(9Z-octadecenoyl)-sn-glycero-3-cytidine-5'-diphosphate + diphosphate. The catalysed reaction is 1-octadecanoyl-2-(4Z,7Z,10Z,13Z,16Z,19Z-docosahexaenoyl)-sn-glycero-3-phosphate + CTP + H(+) = 1-octadecanoyl-2-(4Z,7Z,10Z,13Z,16Z,19Z-docosahexaenoyl)-sn-glycero-3-cytidine-5'-diphosphate + diphosphate. It catalyses the reaction 1,2-di-(9Z,12Z-octadecadienoyl)-sn-glycero-3-phosphate + CTP + H(+) = 1,2-di-(9Z,12Z-octadecadienoyl)-sn-glycero-3-cytidine-5'-diphosphate + diphosphate. It carries out the reaction 1,2-di-(9Z-octadecenoyl)-sn-glycero-3-phosphate + CTP + H(+) = 1,2-di-(9Z-octadecenoyl)-sn-glycero-3-cytidine-5'-diphosphate + diphosphate. It functions in the pathway phospholipid metabolism; CDP-diacylglycerol biosynthesis; CDP-diacylglycerol from sn-glycerol 3-phosphate: step 3/3. Inhibited by its anionic phospholipid end products, with phosphatidylinositol-(4,5)- bisphosphate showing the strongest inhibition. Its function is as follows. Catalyzes the conversion of phosphatidic acid (PA) to CDP-diacylglycerol (CDP-DAG), an essential intermediate in the synthesis of phosphatidylglycerol, cardiolipin and phosphatidylinositol. Exhibits almost no acyl chain preference for PA, showing no discrimination for the sn-1/sn-2 acyl chain composition of PAs. Plays an important role in regulating the growth of lipid droplets which are storage organelles at the center of lipid and energy homeostasis. Positively regulates the differentiation and development of adipocytes. This Homo sapiens (Human) protein is Phosphatidate cytidylyltransferase 1.